The chain runs to 145 residues: Putative antiporter subunit mnhG2 (145 aa).

Transmembrane regions (helical) follow at residues 11–31 (IAAVMLLLGSFIALISAIGIV), 51–71 (VLLTLIGVLIYFIVNTGFFSV), and 72–92 (RLLLSLVFINLTSPVGMHLVA).

It belongs to the CPA3 antiporters (TC 2.A.63) subunit G family. In terms of assembly, may form a heterooligomeric complex that consists of seven subunits: mnhA2, mnhB2, mnhC2, mnhD2, mnhE2, mnhF2 and mnhG2.

It localises to the cell membrane. This chain is Putative antiporter subunit mnhG2 (mnhG2), found in Staphylococcus aureus (strain COL).